Consider the following 317-residue polypeptide: Transaldolase (317 aa).

The Schiff-base intermediate with substrate role is filled by Lys132.

This sequence belongs to the transaldolase family. Type 1 subfamily. In terms of assembly, homodimer.

The protein localises to the cytoplasm. It carries out the reaction D-sedoheptulose 7-phosphate + D-glyceraldehyde 3-phosphate = D-erythrose 4-phosphate + beta-D-fructose 6-phosphate. Its pathway is carbohydrate degradation; pentose phosphate pathway; D-glyceraldehyde 3-phosphate and beta-D-fructose 6-phosphate from D-ribose 5-phosphate and D-xylulose 5-phosphate (non-oxidative stage): step 2/3. Transaldolase is important for the balance of metabolites in the pentose-phosphate pathway. This is Transaldolase from Shewanella amazonensis (strain ATCC BAA-1098 / SB2B).